Here is a 62-residue protein sequence, read N- to C-terminus: Small ribosomal subunit protein uS14 (62 aa).

4 residues coordinate Zn(2+): cysteine 25, cysteine 28, cysteine 41, and cysteine 44.

It belongs to the universal ribosomal protein uS14 family. Zinc-binding uS14 subfamily. In terms of assembly, part of the 30S ribosomal subunit. Contacts proteins S3 and S10. The cofactor is Zn(2+).

Its function is as follows. Binds 16S rRNA, required for the assembly of 30S particles and may also be responsible for determining the conformation of the 16S rRNA at the A site. The sequence is that of Small ribosomal subunit protein uS14 from Aquifex aeolicus (strain VF5).